A 1062-amino-acid chain; its full sequence is Inversin (1062 aa).

ANK repeat units lie at residues 13–42 (SLASQVHAAAVNGDKGALQRLIVGNSALRD), 47–76 (FGRTPLMYCVLADRVDCADALLKAGADVNK), 80–110 (SRRTALHLAAQKGNYRFMKLLLTRRANWMQK), 113–144 (EEMTPLHLSTRHRSPKCLALLLKFMAPGEVDT), 148–177 (NKQTALHWSAYYNNPEHAKLLIKHDSNIGI), 181–213 (EGKIPLHWAANHKDPSAVHTVRCILDAAPTESL), 220–250 (EGRTPLHFAVADGNLTVVDVLTSYESCNITS), 254–283 (LFRTPLHWAALLGHAQIVHLLLERNKSGTI), 288–317 (QGATPLHYAAQSNFAETVKVFLQHPSVKDD), 321–350 (EGRTSFMWAAGKGNDDVLRTMLSLKSDIDI), 356–385 (YGGTALHAAALSGHVSTVKLLLDNDAQVDA), 389–418 (MKHTPLFRACEMGHRDVIQTLIKGGARVDL), 422–451 (DGHSLLHWAALGGNADVCQILIENKINPNV), 455–484 (AGRTPLQCAAYGGYINCMAVLMENNADPNI), 488–517 (EGRTALHWSCNNGYLDAIKLLLDFAAFPNQ), and 523–553 (ERYTPLDYALLGERHEVIQFMLEHGALSIAA). 3-hydroxyasparagine is present on Asn-75. Residues 490–498 (RTALHWSCN) carry the D-box 1 motif. The IQ 1 domain occupies 555-584 (QDIAAFKIQAVYKGYKVRKAFRDRKNLLMK). Over residues 589–608 (RKDAAAKKREEENKRKEAEQ) the composition is skewed to basic and acidic residues. The segment at 589–849 (RKDAAAKKRE…QDKLIGGVSS (261 aa)) is disordered. Composition is skewed to polar residues over residues 636–658 (QNEGSKQDATPSKQPPASHTVQS) and 676–689 (QGDSSIDLQGTASR). The segment covering 690–700 (KPSETPIEHCR) has biased composition (basic and acidic residues). The segment covering 713–724 (GGNSSKNQGTSS) has biased composition (polar residues). Basic and acidic residues-rich tracts occupy residues 725–741 (VEKRRGETNGKHRRCEE) and 775–788 (DHPRKPNKRQDRAA). Positions 907–915 (RKELFRRKN) match the D-box 2 motif. The IQ 2 domain maps to 914 to 943 (KNKAAAVIQRAWRSYQLRKHLSRLLHLKQL). The disordered stretch occupies residues 1042-1062 (RSKKFSYNLQPSSQSKNKPKL). The segment covering 1046–1062 (FSYNLQPSSQSKNKPKL) has biased composition (polar residues).

In terms of assembly, interacts with microtubules. Interacts with NPHP1. Interacts with DVL1, PRICKLE (PRICKLE1 or PRICKLE2) and Strabismus (VANGL1 or VANGL2). Binds calmodulin via its IQ domains. Interacts with APC2. Interacts with alpha-, beta-, and gamma-catenin. Interacts with N-cadherin (CDH2). Interacts with NPHP3. Interacts with IQCB1; the interaction likely requires additional interactors. Component of a complex containing at least ANKS6, INVS, NEK8 and NPHP3. ANKS6 may organize complex assembly by linking INVS and NPHP3 to NEK8 and INVS may target the complex to the proximal ciliary axoneme. Post-translationally, may be ubiquitinated via its interaction with APC2. In terms of processing, hydroxylated at Asn-75, most probably by HIF1AN. In terms of tissue distribution, strongly expressed in the primary cilia of renal cells, especially in the varicosities, swellings observed in the cilia. Localizes in the node monocilia and in other 9+0 monocilia, including those of kidney epithelial cells and the pituitary gland, but it does not localize to 9+2 cilia (at protein level). In adult, it is expressed at high level in liver and kidney. Weakly or not expressed in other tissues.

It is found in the cytoplasm. The protein resides in the cytoskeleton. It localises to the membrane. The protein localises to the nucleus. Its subcellular location is the perinuclear region. It is found in the spindle. Functionally, required for normal renal development and establishment of left-right axis. Probably acts as a molecular switch between different Wnt signaling pathways. Inhibits the canonical Wnt pathway by targeting cytoplasmic disheveled (DVL1) for degradation by the ubiquitin-proteasome. This suggests that it is required in renal development to oppose the repression of terminal differentiation of tubular epithelial cells by Wnt signaling. Involved in the organization of apical junctions in kidney cells together with NPHP1, NPHP4 and RPGRIP1L/NPHP8. Does not seem to be strictly required for ciliogenesis. This is Inversin (Invs) from Mus musculus (Mouse).